The sequence spans 340 residues: Phenylalanine--tRNA ligase alpha subunit (340 aa).

Glutamate 255 is a Mg(2+) binding site.

This sequence belongs to the class-II aminoacyl-tRNA synthetase family. Phe-tRNA synthetase alpha subunit type 1 subfamily. Tetramer of two alpha and two beta subunits. Requires Mg(2+) as cofactor.

The protein localises to the cytoplasm. It catalyses the reaction tRNA(Phe) + L-phenylalanine + ATP = L-phenylalanyl-tRNA(Phe) + AMP + diphosphate + H(+). The chain is Phenylalanine--tRNA ligase alpha subunit from Syntrophomonas wolfei subsp. wolfei (strain DSM 2245B / Goettingen).